The sequence spans 86 residues: Small ribosomal subunit protein bS16 (86 aa).

Belongs to the bacterial ribosomal protein bS16 family.

In Methylacidiphilum infernorum (isolate V4) (Methylokorus infernorum (strain V4)), this protein is Small ribosomal subunit protein bS16.